The primary structure comprises 366 residues: Beta sliding clamp (366 aa).

It belongs to the beta sliding clamp family. In terms of assembly, forms a ring-shaped head-to-tail homodimer around DNA which binds and tethers DNA polymerases and other proteins to the DNA. The DNA replisome complex has a single clamp-loading complex (3 tau and 1 each of delta, delta', psi and chi subunits) which binds 3 Pol III cores (1 core on the leading strand and 2 on the lagging strand) each with a beta sliding clamp dimer. Additional proteins in the replisome are other copies of gamma, psi and chi, Ssb, DNA helicase and RNA primase.

It localises to the cytoplasm. Confers DNA tethering and processivity to DNA polymerases and other proteins. Acts as a clamp, forming a ring around DNA (a reaction catalyzed by the clamp-loading complex) which diffuses in an ATP-independent manner freely and bidirectionally along dsDNA. Initially characterized for its ability to contact the catalytic subunit of DNA polymerase III (Pol III), a complex, multichain enzyme responsible for most of the replicative synthesis in bacteria; Pol III exhibits 3'-5' exonuclease proofreading activity. The beta chain is required for initiation of replication as well as for processivity of DNA replication. The polypeptide is Beta sliding clamp (dnaN) (Buchnera aphidicola subsp. Acyrthosiphon pisum (strain APS) (Acyrthosiphon pisum symbiotic bacterium)).